The following is a 217-amino-acid chain: Octanoyltransferase (217 aa).

A BPL/LPL catalytic domain is found at 32-207 (SESHDELWIV…TFSQLLGYQH (176 aa)). Substrate-binding positions include 71-78 (RGGQVTYH), 138-140 (SLG), and 151-153 (GLA). Residue cysteine 169 is the Acyl-thioester intermediate of the active site.

This sequence belongs to the LipB family.

It is found in the cytoplasm. The catalysed reaction is octanoyl-[ACP] + L-lysyl-[protein] = N(6)-octanoyl-L-lysyl-[protein] + holo-[ACP] + H(+). Its pathway is protein modification; protein lipoylation via endogenous pathway; protein N(6)-(lipoyl)lysine from octanoyl-[acyl-carrier-protein]: step 1/2. Catalyzes the transfer of endogenously produced octanoic acid from octanoyl-acyl-carrier-protein onto the lipoyl domains of lipoate-dependent enzymes. Lipoyl-ACP can also act as a substrate although octanoyl-ACP is likely to be the physiological substrate. The protein is Octanoyltransferase of Shewanella baltica (strain OS223).